The sequence spans 268 residues: Tryptophan synthase alpha chain (268 aa).

Residues glutamate 49 and aspartate 60 each act as proton acceptor in the active site.

The protein belongs to the TrpA family. In terms of assembly, tetramer of two alpha and two beta chains.

The catalysed reaction is (1S,2R)-1-C-(indol-3-yl)glycerol 3-phosphate + L-serine = D-glyceraldehyde 3-phosphate + L-tryptophan + H2O. The protein operates within amino-acid biosynthesis; L-tryptophan biosynthesis; L-tryptophan from chorismate: step 5/5. In terms of biological role, the alpha subunit is responsible for the aldol cleavage of indoleglycerol phosphate to indole and glyceraldehyde 3-phosphate. This Escherichia coli O17:K52:H18 (strain UMN026 / ExPEC) protein is Tryptophan synthase alpha chain.